Reading from the N-terminus, the 264-residue chain is ATP synthase subunit a (264 aa).

6 helical membrane passes run 29 to 49 (TWHIDSLFFSVGLGVLFLWIF), 87 to 107 (NALIAPLALTIFVWVFMMNFM), 134 to 154 (DVNITFSLAIGVFVLIIYYSI), 177 to 197 (IPVNLLLETVTLIAKPISLAL), 208 to 228 (LIFILIALMYGTNLLLSSLGV), and 235 to 255 (LIFHILVITLQAFIFMMLTIV).

It belongs to the ATPase A chain family. As to quaternary structure, F-type ATPases have 2 components, CF(1) - the catalytic core - and CF(0) - the membrane proton channel. CF(1) has five subunits: alpha(3), beta(3), gamma(1), delta(1), epsilon(1). CF(0) has three main subunits: a(1), b(2) and c(9-12). The alpha and beta chains form an alternating ring which encloses part of the gamma chain. CF(1) is attached to CF(0) by a central stalk formed by the gamma and epsilon chains, while a peripheral stalk is formed by the delta and b chains.

The protein resides in the cell inner membrane. Key component of the proton channel; it plays a direct role in the translocation of protons across the membrane. This Shewanella sp. (strain MR-4) protein is ATP synthase subunit a.